We begin with the raw amino-acid sequence, 343 residues long: CRISPR-associated endonuclease Cas1 1 (343 aa).

Mn(2+)-binding residues include glutamate 166, histidine 234, and glutamate 249.

Belongs to the CRISPR-associated endonuclease Cas1 family. As to quaternary structure, homodimer, forms a heterotetramer with a Cas2 homodimer. The cofactor is Mg(2+). It depends on Mn(2+) as a cofactor.

CRISPR (clustered regularly interspaced short palindromic repeat), is an adaptive immune system that provides protection against mobile genetic elements (viruses, transposable elements and conjugative plasmids). CRISPR clusters contain spacers, sequences complementary to antecedent mobile elements, and target invading nucleic acids. CRISPR clusters are transcribed and processed into CRISPR RNA (crRNA). Acts as a dsDNA endonuclease. Involved in the integration of spacer DNA into the CRISPR cassette. This chain is CRISPR-associated endonuclease Cas1 1, found in Moorella thermoacetica (strain ATCC 39073 / JCM 9320).